A 527-amino-acid chain; its full sequence is Pentatricopeptide repeat-containing protein At5g41170, mitochondrial (527 aa).

A mitochondrion-targeting transit peptide spans 1 to 35; the sequence is MAMRFFQLHRNRLVKGNSGKALSFSRLLDLSFWVR. PPR repeat units follow at residues 36–70, 71–105, 106–140, 141–175, 176–210, 211–245, 246–280, 281–315, 316–350, 351–385, 386–420, 424–458, 459–493, and 494–527; these read AFCN…RPLP, SIID…GVSH, DLYT…GFEP, DIVT…GIKP, DVVM…GIRP, DVVM…KIKP, DVIT…SIAP, NIFT…GCFP, DVVA…GLTG, NTIT…GVPP, NIRT…EMDG, NIWT…EMDI, GIIT…GVKP, and NVVT…DGVS.

This sequence belongs to the PPR family. P subfamily.

It localises to the mitochondrion. The protein is Pentatricopeptide repeat-containing protein At5g41170, mitochondrial of Arabidopsis thaliana (Mouse-ear cress).